The following is a 444-amino-acid chain: Probable glycine dehydrogenase (decarboxylating) subunit 1 (444 aa).

The protein belongs to the GcvP family. N-terminal subunit subfamily. The glycine cleavage system is composed of four proteins: P, T, L and H. In this organism, the P 'protein' is a heterodimer of two subunits.

The enzyme catalyses N(6)-[(R)-lipoyl]-L-lysyl-[glycine-cleavage complex H protein] + glycine + H(+) = N(6)-[(R)-S(8)-aminomethyldihydrolipoyl]-L-lysyl-[glycine-cleavage complex H protein] + CO2. In terms of biological role, the glycine cleavage system catalyzes the degradation of glycine. The P protein binds the alpha-amino group of glycine through its pyridoxal phosphate cofactor; CO(2) is released and the remaining methylamine moiety is then transferred to the lipoamide cofactor of the H protein. In Prosthecochloris aestuarii (strain DSM 271 / SK 413), this protein is Probable glycine dehydrogenase (decarboxylating) subunit 1.